The sequence spans 55 residues: Large ribosomal subunit protein bL33 (55 aa).

The protein belongs to the bacterial ribosomal protein bL33 family.

This chain is Large ribosomal subunit protein bL33, found in Gluconobacter oxydans (strain 621H) (Gluconobacter suboxydans).